Consider the following 233-residue polypeptide: Large ribosomal subunit protein uL1 (233 aa).

Belongs to the universal ribosomal protein uL1 family. As to quaternary structure, part of the 50S ribosomal subunit.

Functionally, binds directly to 23S rRNA. The L1 stalk is quite mobile in the ribosome, and is involved in E site tRNA release. Its function is as follows. Protein L1 is also a translational repressor protein, it controls the translation of the L11 operon by binding to its mRNA. The protein is Large ribosomal subunit protein uL1 of Campylobacter curvus (strain 525.92).